The primary structure comprises 851 residues: MAKTNISPGMQQYLDIKKDYPDAFLLFRMGDFYELFYEDAVKAAQLLEIGLTSRNKNAENPIPMAGVPHHSAQQYIDVLIELGYKVAVAEQMEDPKQAVGVVKREVVQVITPGTVVDSAKPDSANNFLVAVDFDGCRYGLAYMDVSTGEFCVTDLADFTSVRSEIQNLKAKEVLLGFDLSEEEQTILVKQMNLLLSYEETVYEDKSLIDGQLTTVELTAAGKLLQYVHKTQMRELSHLQALVHYEIKDYLQMSYATKSSLDLVENARTNKKHGSLYWLLDETKTAMGMRLLRSWIDRPLVSKEAILERQEIIQVFLNAFIERTDLSNSLKGVYDIERLSSRVSFGKANPKDLLQLGHTLAQVPYIKAILESFDSPCVDKLVNDIDSLPELEYLIRTAIDPDAPATISEGSIIRNGFDERLDHYRKVMREGTGWIADIEAKERQASGINNLKIDYNKKDGYYFHVTNSNLSLVPEHFFRKATLKNSERYGTAELAKIEGQMLEAREESSSLEYDIFMCIRAQVETYINRLQKLAKILATVDVLQSLAVVAETNHYIRPQFNDNHVITIQEGRHAVVEKVMGVQEYIPNSISFDQQTSIQLITGPNMSGKSTYMRQLALTVIMAQMGSFVAADHVDLPLFDAIFTRIGAADDLISGQSTFMVEMMEANQAIKRASDNSLILFDELGRGTATYDGMALAQAIIEYIHDRVGAKTIFATHYHELTDLSTKLTSLVNVHVATLEKDGDVTFLHKIAEGPADKSYGIHVAKIAGLPKSLLKRADEVLTRLETQSRSTEIISVPSQVESSSAVRQGQLSLFGDEEKTHEIRQALEAIDVMNMTPLQAMTTLYELKKLL.

Position 602 to 609 (602 to 609) interacts with ATP; the sequence is GPNMSGKS.

The protein belongs to the DNA mismatch repair MutS family.

Functionally, this protein is involved in the repair of mismatches in DNA. It is possible that it carries out the mismatch recognition step. This protein has a weak ATPase activity. This chain is DNA mismatch repair protein MutS, found in Streptococcus pyogenes serotype M3 (strain SSI-1).